The chain runs to 457 residues: ATP-dependent RNA helicase DbpA (457 aa).

The Q motif signature appears at Ala3 to Ala31. The 172-residue stretch at Leu34–Ile205 folds into the Helicase ATP-binding domain. Ala47–Thr54 is an ATP binding site. The short motif at Asp153–Asp156 is the DEAD box element. The 147-residue stretch at Pro230 to Ala376 folds into the Helicase C-terminal domain. An involved in 23S rRNA binding region spans residues Ala383–Lys457.

This sequence belongs to the DEAD box helicase family. DbpA subfamily. In terms of assembly, monomer.

The protein localises to the cytoplasm. The catalysed reaction is ATP + H2O = ADP + phosphate + H(+). Requires hairpin 92 of 23S rRNA for optimal activity. ATPase activity is stimulated by interaction of the N-terminal domain with RNA. Its function is as follows. DEAD-box RNA helicase involved in the assembly of the 50S ribosomal subunit. Has an RNA-dependent ATPase activity, which is specific for 23S rRNA, and a 3' to 5' RNA helicase activity that uses the energy of ATP hydrolysis to destabilize and unwind short rRNA duplexes. Requires a single-stranded RNA loading site on the 3' side of the substrate helix. The sequence is that of ATP-dependent RNA helicase DbpA from Escherichia coli (strain K12).